The chain runs to 354 residues: MFCSALRNILRNSQNAAKNATITSQIRNLRGQQSVHHEVEVLTSPGITTKQNDKKTEPAECEGSKEVALDFRNREAHVPSFNLAAYVNNSSTLQQFLSLGVDLHSIERRKGLGDFVLKLDFEKNVKPYITFLVDQGVSPDDFGRMFTKNPLLFKEDLDDLQTRVNYLKSKRFSDEARQRILTQNPYWLMFSTRRVDRRLGYFQKEFKLSGHDLRLLATREPNAITYNMEHLRKSVFTLKEEMGFNAKELSDLVVRKPRLLMIPPDDLVERFSYIHQDMGLPHAQIVQCPELLASREFRLRERHEFLKLLGRAQYDPQKDLYISPKTIVEGNNFYFVRNVAKSDLETFDLFLKTR.

The transit peptide at 1–89 (MFCSALRNIL…SFNLAAYVNN (89 aa)) directs the protein to the mitochondrion.

This sequence belongs to the mTERF family.

Its subcellular location is the mitochondrion. Functionally, binds promoter DNA and regulates initiation of transcription. Regulator of mitochondrial ribosome biogenesis and translation that is essential for development. Required for normal mitochondrial transcription and translation. Required for assembly of mitochondrial respiratory complexes and normal mitochondrial function. Maintains 16S rRNA levels and functions in mitochondrial ribosome assembly by regulating the biogenesis of the 39S ribosomal subunit. The protein is Transcription termination factor 3, mitochondrial of Drosophila melanogaster (Fruit fly).